Consider the following 187-residue polypeptide: Threonylcarbamoyl-AMP synthase (187 aa).

Residues 4-187 (TLTLSEAVTA…DARSGHILRL (184 aa)) form the YrdC-like domain.

It belongs to the SUA5 family. TsaC subfamily.

The protein localises to the cytoplasm. It carries out the reaction L-threonine + hydrogencarbonate + ATP = L-threonylcarbamoyladenylate + diphosphate + H2O. Functionally, required for the formation of a threonylcarbamoyl group on adenosine at position 37 (t(6)A37) in tRNAs that read codons beginning with adenine. Catalyzes the conversion of L-threonine, HCO(3)(-)/CO(2) and ATP to give threonylcarbamoyl-AMP (TC-AMP) as the acyladenylate intermediate, with the release of diphosphate. The protein is Threonylcarbamoyl-AMP synthase of Xylella fastidiosa (strain 9a5c).